The primary structure comprises 60 residues: Large ribosomal subunit protein bL32 (60 aa).

This sequence belongs to the bacterial ribosomal protein bL32 family.

This chain is Large ribosomal subunit protein bL32, found in Petrotoga mobilis (strain DSM 10674 / SJ95).